The chain runs to 659 residues: mRNA export factor ICP27 homolog (659 aa).

Residues Cys-130, His-266, Cys-268, and Cys-273 each contribute to the Zn(2+) site. Residues 130 to 273 form a CHC2-type zinc finger; that stretch reads CMMSNGERPP…CEHACNDNAC (144 aa). The segment at 317 to 659 is disordered; the sequence is GSFDDSRSAT…GEDGESDMTL (343 aa). Residues 324-336 are compositionally biased toward low complexity; the sequence is SATSGDGSSCSSA. The span at 354-365 shows a compositional bias: polar residues; that stretch reads SDQTDTSNNGTV. Basic and acidic residues predominate over residues 387–397; that stretch reads SPLDRPNDYHY. The segment covering 413–427 has biased composition (low complexity); the sequence is GSGSSSTEAVSTASA. The segment covering 483-499 has biased composition (basic and acidic residues); the sequence is SPERRSSEERSSSDQRR. Residues 503–513 are compositionally biased toward polar residues; sequence LSRSASATSGG. Residues 553 to 575 are compositionally biased toward low complexity; it reads SRSNTPPSSPSKPDSAPAASASP. A compositionally biased stretch (basic and acidic residues) spans 598–610; it reads ESVRVSERFETGD. 2 stretches are compositionally biased toward acidic residues: residues 617-628 and 646-659; these read ETEDESDDEDDQ and SETD…DMTL.

It belongs to the HHV-1 ICP27 protein family.

It localises to the virion tegument. It is found in the virion. Its subcellular location is the host nucleus. The protein resides in the host cytoplasm. Immediate early (EI) protein that plays many roles during productive infection including regulation of viral gene expression and nuclear export of intronless viral RNAs. The protein is mRNA export factor ICP27 homolog of Elephantid herpesvirus 1 (isolate Asian elephant/Berlin/Kiba/1998) (EIHV-1).